The primary structure comprises 128 residues: uncharacterized protein (128 aa).

This is an uncharacterized protein from Mycoplasma pneumoniae (strain ATCC 29342 / M129 / Subtype 1) (Mycoplasmoides pneumoniae).